The sequence spans 331 residues: Phospho-N-acetylmuramoyl-pentapeptide-transferase (331 aa).

9 helical membrane-spanning segments follow: residues 7–27 (IIYTIIIGFIITLILGPLTIP), 54–74 (TIGGIILIMSIIITSLTSGLI), 78–98 (LWIALAATVAFGIIGFIDDFI), 106–126 (LGLRAYQKLILQGTIAVILAI), 133–153 (IMGTEVIVPFVGEGITIAGFT), 154–174 (ITQTIDLGILYIPFIVFVVVA), 195–215 (IIAAFFALVAMSWGYVSLAIF), 249–269 (AIATIAVLMNVVLIIPIVGGI), and 311–331 (VVIVFWVVTVILCLVGMLALS).

It belongs to the glycosyltransferase 4 family. MraY subfamily. Requires Mg(2+) as cofactor.

It is found in the cell membrane. The catalysed reaction is UDP-N-acetyl-alpha-D-muramoyl-L-alanyl-gamma-D-glutamyl-meso-2,6-diaminopimeloyl-D-alanyl-D-alanine + di-trans,octa-cis-undecaprenyl phosphate = di-trans,octa-cis-undecaprenyl diphospho-N-acetyl-alpha-D-muramoyl-L-alanyl-D-glutamyl-meso-2,6-diaminopimeloyl-D-alanyl-D-alanine + UMP. It functions in the pathway cell wall biogenesis; peptidoglycan biosynthesis. Functionally, catalyzes the initial step of the lipid cycle reactions in the biosynthesis of the cell wall peptidoglycan: transfers peptidoglycan precursor phospho-MurNAc-pentapeptide from UDP-MurNAc-pentapeptide onto the lipid carrier undecaprenyl phosphate, yielding undecaprenyl-pyrophosphoryl-MurNAc-pentapeptide, known as lipid I. The polypeptide is Phospho-N-acetylmuramoyl-pentapeptide-transferase (Alkaliphilus metalliredigens (strain QYMF)).